A 222-amino-acid chain; its full sequence is ATP synthase F(0) complex subunit a (222 aa).

6 helical membrane-spanning segments follow: residues 8-28 (FFYV…ILLP), 64-84 (WSLM…LGLL), 93-113 (QLTV…VPGF), 127-147 (QGTP…SLLI), 160-180 (ITAG…LSSI), and 197-219 (ILEL…LYLH).

It belongs to the ATPase A chain family. In terms of assembly, component of the ATP synthase complex composed at least of ATP5F1A/subunit alpha, ATP5F1B/subunit beta, ATP5MC1/subunit c (homooctomer), MT-ATP6/subunit a, MT-ATP8/subunit 8, ATP5ME/subunit e, ATP5MF/subunit f, ATP5MG/subunit g, ATP5MK/subunit k, ATP5MJ/subunit j, ATP5F1C/subunit gamma, ATP5F1D/subunit delta, ATP5F1E/subunit epsilon, ATP5PF/subunit F6, ATP5PB/subunit b, ATP5PD/subunit d, ATP5PO/subunit OSCP. ATP synthase complex consists of a soluble F(1) head domain (subunits alpha(3) and beta(3)) - the catalytic core - and a membrane F(0) domain - the membrane proton channel (subunits c, a, 8, e, f, g, k and j). These two domains are linked by a central stalk (subunits gamma, delta, and epsilon) rotating inside the F1 region and a stationary peripheral stalk (subunits F6, b, d, and OSCP). Interacts with DNAJC30; interaction is direct.

It localises to the mitochondrion inner membrane. It catalyses the reaction H(+)(in) = H(+)(out). Functionally, subunit a, of the mitochondrial membrane ATP synthase complex (F(1)F(0) ATP synthase or Complex V) that produces ATP from ADP in the presence of a proton gradient across the membrane which is generated by electron transport complexes of the respiratory chain. ATP synthase complex consist of a soluble F(1) head domain - the catalytic core - and a membrane F(1) domain - the membrane proton channel. These two domains are linked by a central stalk rotating inside the F(1) region and a stationary peripheral stalk. During catalysis, ATP synthesis in the catalytic domain of F(1) is coupled via a rotary mechanism of the central stalk subunits to proton translocation. With the subunit c (ATP5MC1), forms the proton-conducting channel in the F(0) domain, that contains two crucial half-channels (inlet and outlet) that facilitate proton movement from the mitochondrial intermembrane space (IMS) into the matrix. Protons are taken up via the inlet half-channel and released through the outlet half-channel, following a Grotthuss mechanism. In Loxodonta africana (African elephant), this protein is ATP synthase F(0) complex subunit a.